The following is a 301-amino-acid chain: tRNA dimethylallyltransferase 1 (301 aa).

Gly-10–Thr-17 contributes to the ATP binding site. Thr-12–Thr-17 serves as a coordination point for substrate. The interval Asp-35–Gln-38 is interaction with substrate tRNA.

It belongs to the IPP transferase family. In terms of assembly, monomer. It depends on Mg(2+) as a cofactor.

It catalyses the reaction adenosine(37) in tRNA + dimethylallyl diphosphate = N(6)-dimethylallyladenosine(37) in tRNA + diphosphate. Its function is as follows. Catalyzes the transfer of a dimethylallyl group onto the adenine at position 37 in tRNAs that read codons beginning with uridine, leading to the formation of N6-(dimethylallyl)adenosine (i(6)A). The polypeptide is tRNA dimethylallyltransferase 1 (Geotalea uraniireducens (strain Rf4) (Geobacter uraniireducens)).